The primary structure comprises 426 residues: Tol-Pal system protein TolB (426 aa).

An N-terminal signal peptide occupies residues Met-1 to Ala-25.

The protein belongs to the TolB family. As to quaternary structure, the Tol-Pal system is composed of five core proteins: the inner membrane proteins TolA, TolQ and TolR, the periplasmic protein TolB and the outer membrane protein Pal. They form a network linking the inner and outer membranes and the peptidoglycan layer.

The protein localises to the periplasm. Functionally, part of the Tol-Pal system, which plays a role in outer membrane invagination during cell division and is important for maintaining outer membrane integrity. In Aromatoleum aromaticum (strain DSM 19018 / LMG 30748 / EbN1) (Azoarcus sp. (strain EbN1)), this protein is Tol-Pal system protein TolB.